Reading from the N-terminus, the 289-residue chain is Release factor glutamine methyltransferase (289 aa).

Residues 130-134 (GTGTG), aspartate 153, tryptophan 182, and asparagine 196 each bind S-adenosyl-L-methionine. Position 196–199 (196–199 (NPPY)) interacts with substrate.

This sequence belongs to the protein N5-glutamine methyltransferase family. PrmC subfamily.

It carries out the reaction L-glutaminyl-[peptide chain release factor] + S-adenosyl-L-methionine = N(5)-methyl-L-glutaminyl-[peptide chain release factor] + S-adenosyl-L-homocysteine + H(+). Its function is as follows. Methylates the class 1 translation termination release factors RF1/PrfA and RF2/PrfB on the glutamine residue of the universally conserved GGQ motif. The polypeptide is Release factor glutamine methyltransferase (Agrobacterium fabrum (strain C58 / ATCC 33970) (Agrobacterium tumefaciens (strain C58))).